We begin with the raw amino-acid sequence, 2090 residues long: MLRVFILFAENVHTPDSDISDAYCSAVFAGVKKRTKVIKNSVNPVWNEGFEWDLKGIPLDQSSELLVVVKDHETMGRNRFLGEAKIPLQEVLATPSLSASFNAPLLDAKQQPTGASLVLQVSYTPPPGAVPLFPPPASLAPSPTLPDMDLVPDTGGEEDTEDQGLTGDEAEPFLDQSAAVGPGGPTTPRKPPSHPPPHYPGAKRKRSSAPPRKLLSDKPQDFQIRVQVIEGRQLPGVNIKPVVKVTAAGQTKRTRIQKGNSPLFNETLFFNVFDSPLELFDEPIFITVVDSRSLRTDALLGEFRMDVGTVYREPRHAYLRKWLLLSDPDDFSAGARGYLKASLCVLGPGDEAPLDKKDPSEDKEDIEGNLLRPTGVALRGAHFCLKLFRAEDLPQMDDAVMDNVKQIFGFDSNKKNLVDPFVEVSFAGKMLCSKILEKTANPQWNQNITLPAMFPSMCEKMRIRVMDWDRLTHNDTVATTYLGMSKISATGGEIEEEPAGVLKSPQATDLDDNLGFLPTFGPCYVNLYGSPREFTGFPDPYAELNTGKGEGVAYRGRVLLSLETKLVEHSEQKVEDLPADDILRVEKYLRRRKYSLFAAFYSATMLQDVDDAIQFEVSIGNYGNKFDTTCLPLASTTQYSRAVFDGGSLPLPVGCHYYYLPWGNVKPVVVLSSYWEDISHRIEIQNQLLRVADRLEANLEQVHLALKAQCSSEDVDALVAQLTDELLADCSQPLCDIHEIPSATHLDQYLLRLRTRHLSQIKEAALALKLGHSELSTALEQAEDWLLHLRALAEEPQNSLPDIIIWMLQGDKRVAYQRVPAHEVLFSRRGPSYCGRNCGKLQTIFLKYPMEGMPGARMPVQIRIKLWFGLSVDEKEFNQFAEGKLSVFAETYENQTKLALVGNWGTTGLTYPKFSDVTGKIKLPKDSFRPSAGWAWAGDWFVCPEKTLLHDADAGHLSFVEEVFENQTRLPGGQWIYMSDNYTDVNGEKVLPKDDIECPLGWKWEDEEWSTDLNRAVDEQGWEYSITIPPDRKPKHWVPVEKMYYTHRRRRWVRLRRRDLSQMEALKRHRQAEAEGEGWEYASLFGWKFHLEYRKTDAFRRRRWRRRMEPLEKTGPAAVFALEGALGGMVDDKSEDSMSVSTLSFGVNRPTISCIFDYGNRYHLRCYLYQARDLPAMDKDSFSDPYAIVSFLHQSQKTVVEKNTLNPTWDQTLIFYEIEIFGEPASIAEHPPCIVVELYDHDTYGADEFMGRCICQPSLERMPRLAWFPLTRGSQPAGELLAAFELIQREKPAIHHIPGFEMHETSRILDETEDTDLPYPPPQREANIYMVPQNIKPALQRTAIEILAWGLRNMKSYQMASISSPSLVVECGGQTVQSCVIRNLRKNPNFDVCTLFMEVMLPREDLYCPPIVVKVIDNRQFGRRPVVGQCTIRSLENFLCDPYSAESPSPQGGPDDVSLLSPGEDVLIDIDDKEPLIPVQEEEFIDWWSKFFASVGEREKCGSYLEKDFDTLKVYDTQLENVEAFGGLSDFCNTFKLYRGRTQEETDDPSVIGEFKGLFKIYPLPEDPAIPMPPRQFHQLAAQGPQECLVRIYIVRAFGLQPKDPNGKCDPYIKISIGKKSVSDQDNYIPCTLEPVFGKMFELTCTLPLEKDLKITLYDYDLLSKDEKIGETVIDLENRLLSKFGARCGLPQTYCVSGPNQWRDQLRPSQLLHLFCQQHRIKAPVYRTDRVTFQDKDYTIEEIEAGRLPNPHLGPVEERLALHVLQQQGLVPEHVESRPLYSPLQPDIEQGKLQMWIDIFPKVLGRPGPPFNITPRKARRFFLRCIIWNTKDVILDDLSLTGEKMSDIYVKGWMVGFEEHKQKTDVHYRSLGGEGNFNWRFVFPFDYLPAEQVCAVAKKDAFWRLDKTESKIPARVVFQIWDNDKFSFDDFLGSLQLDLNRMPKPAKTAEKCSLDQLDDTFHPEWFVSLFEQKTVKGWWPCVTEEGEKKMLAGKLEMTLEIVAESEHEERPAGQGRDEPNMNPKLEDPRRPDTSFLWFTSPYKTMKFILWRRFRCAIILFIILFILLLFLGVFVYAFPNYAAMKLVKPFR.

The C2 1 domain occupies 1–101; it reads MLRVFILFAE…LATPSLSASF (101 aa). Topologically, residues 1–2056 are cytoplasmic; that stretch reads MLRVFILFAE…FILWRRFRCA (2056 aa). Ca(2+)-binding residues include Asp-18, Ile-19, Asp-21, and Asn-40. A disordered region spans residues 130–217; it reads VPLFPPPASL…SAPPRKLLSD (88 aa). The span at 155–172 shows a compositional bias: acidic residues; the sequence is GGEEDTEDQGLTGDEAEP. Residue Gly-164 is modified to Phosphoserine. Position 166 is a phosphothreonine (Thr-166). A Phosphoserine modification is found at Gly-167. Residues 188 to 199 are compositionally biased toward pro residues; the sequence is PRKPPSHPPPHY. C2 domains lie at 206–323, 362–498, 1146–1272, 1320–1448, 1571–1689, and 1805–1953; these read RSSA…RKWL, DKED…EEEP, GVNR…PLTR, PPPQ…AESP, PMPP…ARCG, and GRPG…EKCS. Position 209 is a phosphoserine (Ala-209). Pro-219 carries the post-translational modification Phosphothreonine. The Ca(2+) site is built by Asp-411, Asp-419, Asp-467, Asp-469, Asp-475, Asp-1178, Asp-1184, Asp-1240, and Asp-1242. Residues Asp-1604, Asp-1610, Asp-1659, Asp-1661, Asp-1924, Ser-1927, and Asp-1930 each contribute to the Ca(2+) site. A disordered region spans residues 2005 to 2027; it reads SEHEERPAGQGRDEPNMNPKLED. The helical transmembrane segment at 2057–2077 threads the bilayer; that stretch reads IILFIILFILLLFLGVFVYAF. Residues 2078–2090 are Extracellular-facing; the sequence is PNYAAMKLVKPFR.

This sequence belongs to the ferlin family. Interacts with CAV3. Interacts with AHNAK; the interaction is direct and Ca(2+)-independent. Interacts with AHNAK2; the interaction is direct and Ca(2+)-independent. Interacts with ANXA1; the interaction is Ca(2+)- and injury state-dependent. Interacts with ANXA2; the interaction is Ca(2+)- and injury state-dependent. Interacts with CACNA1S and PARVB. Interacts with TRIM72/MG53; interaction is required for transport to sites of cell injury during repair patch formation. Interacts with RIPOR2; this interaction occurs during early myogenic differentiation. Ca(2+) is required as a cofactor. Expressed in skeletal and cardiac muscles (at protein level). Expressed in skeletal muscle and heart. Also found in brain, liver and kidney.

It localises to the cell membrane. The protein localises to the sarcolemma. The protein resides in the cytoplasmic vesicle membrane. In terms of biological role, key calcium ion sensor involved in the Ca(2+)-triggered synaptic vesicle-plasma membrane fusion. Plays a role in the sarcolemma repair mechanism of both skeletal muscle and cardiomyocytes that permits rapid resealing of membranes disrupted by mechanical stress. In Mus musculus (Mouse), this protein is Dysferlin (Dysf).